A 308-amino-acid polypeptide reads, in one-letter code: MEYSHKSVLLKETIEYLNIKPEGIYVDGTLGGGGHSEEILKRLTTGKLIAIDRDLDAIKASKERLKNYKNVEYINDNFKNIKEILKSLNIDKVDGILLDLGVSSYQLEEVKRGFSYMKDAPMDMRMDKNSPFSAYDVVNKYSQQELERVIREYGEEKWASRIAKFIVKEREKGEIKTTFQLVEIIKNAIPASARREGPHPAKRTFQAIRIEVNEELKGLDKAIEDMVEVLRGKGRIAIITFHSLEDRIVKNTFKKLENPCTCPPNMPCTCGKKPVVKIITKKPVLPSKEEIETNSRSRSAKLRVAEKL.

S-adenosyl-L-methionine contacts are provided by residues 33–35 (GGH), Asp-52, Phe-78, Asp-99, and Gln-106. Residues 289-308 (EEIETNSRSRSAKLRVAEKL) form a disordered region.

This sequence belongs to the methyltransferase superfamily. RsmH family.

Its subcellular location is the cytoplasm. The enzyme catalyses cytidine(1402) in 16S rRNA + S-adenosyl-L-methionine = N(4)-methylcytidine(1402) in 16S rRNA + S-adenosyl-L-homocysteine + H(+). Functionally, specifically methylates the N4 position of cytidine in position 1402 (C1402) of 16S rRNA. This chain is Ribosomal RNA small subunit methyltransferase H, found in Thermoanaerobacter sp. (strain X514).